Reading from the N-terminus, the 163-residue chain is UPF0416 protein RBE_0909 (163 aa).

Belongs to the UPF0416 family.

This Rickettsia bellii (strain RML369-C) protein is UPF0416 protein RBE_0909.